The following is a 374-amino-acid chain: Carbamoyl phosphate synthase small chain (374 aa).

The tract at residues 1-186 (MTEHAILVLE…DRNECKRAAP (186 aa)) is CPSase. L-glutamine-binding residues include S47, G237, and G239. One can recognise a Glutamine amidotransferase type-1 domain in the interval 189 to 374 (KVVAYDYGVK…RFITMMAAQS (186 aa)). The Nucleophile role is filled by C265. Residues L266, Q269, N307, G309, and F310 each contribute to the L-glutamine site. Residues H349 and E351 contribute to the active site.

This sequence belongs to the CarA family. As to quaternary structure, composed of two chains; the small (or glutamine) chain promotes the hydrolysis of glutamine to ammonia, which is used by the large (or ammonia) chain to synthesize carbamoyl phosphate. Tetramer of heterodimers (alpha,beta)4.

It catalyses the reaction hydrogencarbonate + L-glutamine + 2 ATP + H2O = carbamoyl phosphate + L-glutamate + 2 ADP + phosphate + 2 H(+). The enzyme catalyses L-glutamine + H2O = L-glutamate + NH4(+). It participates in amino-acid biosynthesis; L-arginine biosynthesis; carbamoyl phosphate from bicarbonate: step 1/1. The protein operates within pyrimidine metabolism; UMP biosynthesis via de novo pathway; (S)-dihydroorotate from bicarbonate: step 1/3. Its function is as follows. Small subunit of the glutamine-dependent carbamoyl phosphate synthetase (CPSase). CPSase catalyzes the formation of carbamoyl phosphate from the ammonia moiety of glutamine, carbonate, and phosphate donated by ATP, constituting the first step of 2 biosynthetic pathways, one leading to arginine and/or urea and the other to pyrimidine nucleotides. The small subunit (glutamine amidotransferase) binds and cleaves glutamine to supply the large subunit with the substrate ammonia. The protein is Carbamoyl phosphate synthase small chain of Xylella fastidiosa (strain Temecula1 / ATCC 700964).